The chain runs to 92 residues: Small ribosomal subunit protein uS19 (92 aa).

Belongs to the universal ribosomal protein uS19 family.

Its function is as follows. Protein S19 forms a complex with S13 that binds strongly to the 16S ribosomal RNA. This is Small ribosomal subunit protein uS19 from Nostoc punctiforme (strain ATCC 29133 / PCC 73102).